A 333-amino-acid polypeptide reads, in one-letter code: Tetraacyldisaccharide 4'-kinase (333 aa).

57-64 (IVGGAGKT) is a binding site for ATP.

This sequence belongs to the LpxK family.

The enzyme catalyses a lipid A disaccharide + ATP = a lipid IVA + ADP + H(+). It functions in the pathway glycolipid biosynthesis; lipid IV(A) biosynthesis; lipid IV(A) from (3R)-3-hydroxytetradecanoyl-[acyl-carrier-protein] and UDP-N-acetyl-alpha-D-glucosamine: step 6/6. Functionally, transfers the gamma-phosphate of ATP to the 4'-position of a tetraacyldisaccharide 1-phosphate intermediate (termed DS-1-P) to form tetraacyldisaccharide 1,4'-bis-phosphate (lipid IVA). In Dechloromonas aromatica (strain RCB), this protein is Tetraacyldisaccharide 4'-kinase.